Consider the following 635-residue polypeptide: DNA-directed RNA polymerase subunit gamma (635 aa).

Zn(2+)-binding residues include Cys74, Cys76, Cys89, and Cys92. Asp471, Asp473, and Asp475 together coordinate Mg(2+).

It belongs to the RNA polymerase beta' chain family. RpoC1 subfamily. In cyanobacteria the RNAP catalytic core is composed of 2 alpha, 1 beta, 1 beta', 1 gamma and 1 omega subunit. When a sigma factor is associated with the core the holoenzyme is formed, which can initiate transcription. Mg(2+) is required as a cofactor. It depends on Zn(2+) as a cofactor.

It catalyses the reaction RNA(n) + a ribonucleoside 5'-triphosphate = RNA(n+1) + diphosphate. Its function is as follows. DNA-dependent RNA polymerase catalyzes the transcription of DNA into RNA using the four ribonucleoside triphosphates as substrates. This Prochlorococcus marinus (strain NATL2A) protein is DNA-directed RNA polymerase subunit gamma.